The primary structure comprises 677 residues: Levanase (677 aa).

The N-terminal stretch at 1-24 (MKKRLIQVMIMFTLLLTMAFSADA) is a signal peptide. Substrate is bound by residues 46–49 (WMND), Gln65, Trp73, 105–106 (FS), 171–172 (RD), Glu223, and Trp313. The active site involves Asp49.

This sequence belongs to the glycosyl hydrolase 32 family.

It is found in the secreted. It catalyses the reaction Hydrolysis of terminal, non-reducing (2-&gt;1)- and (2-&gt;6)-linked beta-D-fructofuranose residues in fructans.. Is completely inhibited by Ag(+) and Hg(2+) ions. Its function is as follows. Exo-fructosidase that can hydrolyze both levan and inulin, leading to the production of free fructose. Is also able to hydrolyze sucrose and to a small extent raffinose, but not melezitose, stachylose, cellobiose, maltose, and lactose. In Bacillus subtilis (strain 168), this protein is Levanase (sacC).